We begin with the raw amino-acid sequence, 388 residues long: Flavin-dependent monooxygenase (388 aa).

Residue arginine 54 participates in NADPH binding. Residues aspartate 61, arginine 117, and aspartate 311 each coordinate FAD.

This sequence belongs to the aromatic-ring hydroxylase family. TetX subfamily. As to quaternary structure, monomer. Requires FAD as cofactor.

Its subcellular location is the cytoplasm. The enzyme catalyses a tetracycline + NADPH + O2 + H(+) = an 11a-hydroxytetracycline + NADP(+) + H2O. It carries out the reaction tetracycline + NADPH + O2 + H(+) = 11a-hydroxytetracycline + NADP(+) + H2O. It catalyses the reaction oxytetracycline + NADPH + O2 + H(+) = 11a-hydroxy-oxytetracycline + NADP(+) + H2O. In terms of biological role, an FAD-requiring monooxygenase active on some tetracycline antibiotic derivatives, which leads to their inactivation. Hydroxylates carbon 11a of tetracycline and some analogs. Functionally, confers resistance to tetracycline via an oxidoreductase activity; NADPH is more active than NAD. Expression in E.coli leads to breakdown of tetracycline. Confers resistance to doxycycline, chlortetracycline, oxytetracycline and minocycline. In Bacteroides fragilis, this protein is Flavin-dependent monooxygenase.